The chain runs to 296 residues: Phosphoribosylaminoimidazole-succinocarboxamide synthase (296 aa).

Belongs to the SAICAR synthetase family.

The catalysed reaction is 5-amino-1-(5-phospho-D-ribosyl)imidazole-4-carboxylate + L-aspartate + ATP = (2S)-2-[5-amino-1-(5-phospho-beta-D-ribosyl)imidazole-4-carboxamido]succinate + ADP + phosphate + 2 H(+). It participates in purine metabolism; IMP biosynthesis via de novo pathway; 5-amino-1-(5-phospho-D-ribosyl)imidazole-4-carboxamide from 5-amino-1-(5-phospho-D-ribosyl)imidazole-4-carboxylate: step 1/2. This Geobacter sp. (strain M21) protein is Phosphoribosylaminoimidazole-succinocarboxamide synthase.